The chain runs to 120 residues: Large ribosomal subunit protein bL20 (120 aa).

This sequence belongs to the bacterial ribosomal protein bL20 family.

In terms of biological role, binds directly to 23S ribosomal RNA and is necessary for the in vitro assembly process of the 50S ribosomal subunit. It is not involved in the protein synthesizing functions of that subunit. This Methylobacillus flagellatus (strain ATCC 51484 / DSM 6875 / VKM B-1610 / KT) protein is Large ribosomal subunit protein bL20.